A 130-amino-acid chain; its full sequence is Fluoride-specific ion channel FluC (130 aa).

Helical transmembrane passes span 3-23, 39-59, 67-87, and 102-122; these read FIFL…YFVG, GTFS…HLAV, FGIF…SYGL, and VSYA…GWFL. G77 and T80 together coordinate Na(+).

Belongs to the fluoride channel Fluc/FEX (TC 1.A.43) family.

It is found in the cell inner membrane. The catalysed reaction is fluoride(in) = fluoride(out). With respect to regulation, na(+) is not transported, but it plays an essential structural role and its presence is essential for fluoride channel function. Functionally, fluoride-specific ion channel. Important for reducing fluoride concentration in the cell, thus reducing its toxicity. The chain is Fluoride-specific ion channel FluC from Helicobacter pylori (strain Shi470).